The following is a 7639-amino-acid chain: Nonribosomal peptide synthetase 4 (7639 aa).

The interval 244-636 is adenylation 1; it reads WQGAMRPDAE…AGRKDAQIKF (393 aa). The 77-residue stretch at 776–852 folds into the Carrier 1 domain; that stretch reads TFSNGTESQL…ALARHVKEIE (77 aa). Ser813 carries the post-translational modification O-(pantetheine 4'-phosphoryl)serine. Residues 865–1295 are epimerization 1; the sequence is FELSPIQRLY…EQNLSLLVES (431 aa). Positions 1337–1767 are condensation 1; the sequence is VEDIYPCSPM…HLGPRHHQQI (431 aa). The tract at residues 1786 to 2181 is adenylation 2; it reads FEEQAILRPE…FGRKDTQVKL (396 aa). The Carrier 2 domain maps to 2313 to 2389; that stretch reads APASDMEKQL…DMAQSALPLS (77 aa). The residue at position 2350 (Ser2350) is an O-(pantetheine 4'-phosphoryl)serine. The segment at 2426 to 2852 is condensation 2; it reads VEDIYPCTPL…LISTRDYQSL (427 aa). An adenylation 3 region spans residues 2878-3269; that stretch reads QPLDKLAVCA…QGRKDNQVKI (392 aa). One can recognise a Carrier 3 domain in the interval 3403–3479; the sequence is REATETETKL…KLASFVQAVE (77 aa). O-(pantetheine 4'-phosphoryl)serine is present on Ser3440. The interval 3491–3928 is epimerization 2; it reads AFPLSPIQKL…RMTQAKAEPQ (438 aa). The interval 3961–4389 is condensation 3; it reads EAVYPCSPVQ…VSDDCAQQLT (429 aa). The tract at residues 4407-4810 is adenylation 4; it reads FERNVQSLPH…VSRKDTQIKL (404 aa). The 77-residue stretch at 4944–5020 folds into the Carrier 4 domain; it reads APTTMMQRKL…EMATCCGHSE (77 aa). Residue Ser4981 is modified to O-(pantetheine 4'-phosphoryl)serine. The interval 5058-5478 is condensation 4; sequence QDLYPCSSLQ…QFCSEEDLQM (421 aa). Residues 5498-5900 form an adenylation 5 region; it reads FWQSVATYHD…IGRKDNQVKL (403 aa). One can recognise a Carrier 5 domain in the interval 6039–6115; it reads TDTTFVGQLL…DLVTLIEKEG (77 aa). Ser6076 bears the O-(pantetheine 4'-phosphoryl)serine mark. Residues 6133–6567 are epimerization 3; the sequence is FALSPIQQLF…EVLGNMAMEL (435 aa). The condensation 5 stretch occupies residues 6607–7032; sequence VEDMYPCSPM…EALSHLRVSQ (426 aa). The Carrier 6 domain occupies 7088 to 7164; that stretch reads RDKDQVYNKL…TLLNCLRDKS (77 aa). Ser7125 carries the O-(pantetheine 4'-phosphoryl)serine modification. Residues 7254–7603 form a condensation 6 region; sequence LDGEGPLDVA…SNTEVCFLYR (350 aa).

This sequence belongs to the NRP synthetase family.

The catalysed reaction is D-allo-threonine + D-leucine + D-alanine + L-proline + 2 L-leucine + A = fusahexin + AH2 + 6 H2O. The protein operates within secondary metabolite biosynthesis. Nonribosomal peptide synthetase; part of the gene cluster that mediates the biosynthesis of the fusahexin, a cyclic hydrophobic hexapeptide with the amino acid sequence cyclo-(D-Ala-L-Leu-D-allo-Thr-L-Pro-D-Leu-L-Leu) that plays an important role in cell surface hydrophobicity. Fusahexin might also play a role in virulence, sensitivity to osmotic stress and oxidative stress. NRPS4 is the only enzyme within the cluster and its 5 catalytic modules are sufficient to produce fusahexin. The modules 1 to 4 incorporate respectively D-alanine, L-leucine, D-allo-threonine, and L-proline, which is supported by the presence of epimerase domains in modules 1 and 3, which incorporate D-amino acids. The terminal module is responsible for incorporation of the two adjacent leucine units, where the epimerase domain is only used to convert the first unit to D-leucine. The terminal condensation domain (Ct) is involved in cyclization with D-alanine and thereby releasing of fusahexin. The sequence is that of Nonribosomal peptide synthetase 4 from Gibberella zeae (strain ATCC MYA-4620 / CBS 123657 / FGSC 9075 / NRRL 31084 / PH-1) (Wheat head blight fungus).